The following is a 203-amino-acid chain: Kunitz trypsin inhibitor 6 (203 aa).

The signal sequence occupies residues 1–21 (MKTFQLMMISFLFVAITTTSG). Cysteines 70 and 115 form a disulfide. N94, N127, N136, N144, and N197 each carry an N-linked (GlcNAc...) asparagine glycan.

Belongs to the protease inhibitor I3 (leguminous Kunitz-type inhibitor) family.

Exhibits Kunitz trypsin protease inhibitor activity. The protein is Kunitz trypsin inhibitor 6 of Arabidopsis thaliana (Mouse-ear cress).